Consider the following 393-residue polypeptide: MTAPTTRKDLMIVNMGPQHPSMHGVLRLIVTLDGEDVVDCEPILGYLHRGMEKIAENRTIIQYLPYVTRWDYLATMFTEAITINGPEQLGNIQVPKRASYIRVIMLELSRIASHLLWLGPFMADIGAQTPFFYIFRERELIYDLFEAATGMRMMHNFFRIGGVAADLPYGWIDKCLDFCDYFLTGVAEYQKLITRNPIFLERVEGVGIIGRDEALNWGLSGPMLRASGIEWDLRKVDHYESYDEFDWQVQWQREGDSLARYLVRIGEMTESIKIIQQALEGIPGGPYENLEMRRFDRLKDPEWNDFEYRFISKKPSPTFELSKQELYVRVEAPKGELGIFMIGDQSVFPWRWKIRPPGFINLQILPQLVKRMKLADIMTILGSIDIIMGEVDR.

This sequence belongs to the complex I 49 kDa subunit family. In terms of assembly, NDH is composed of at least 16 different subunits, 5 of which are encoded in the nucleus.

The protein localises to the plastid. It localises to the chloroplast thylakoid membrane. It catalyses the reaction a plastoquinone + NADH + (n+1) H(+)(in) = a plastoquinol + NAD(+) + n H(+)(out). It carries out the reaction a plastoquinone + NADPH + (n+1) H(+)(in) = a plastoquinol + NADP(+) + n H(+)(out). Its function is as follows. NDH shuttles electrons from NAD(P)H:plastoquinone, via FMN and iron-sulfur (Fe-S) centers, to quinones in the photosynthetic chain and possibly in a chloroplast respiratory chain. The immediate electron acceptor for the enzyme in this species is believed to be plastoquinone. Couples the redox reaction to proton translocation, and thus conserves the redox energy in a proton gradient. The chain is NAD(P)H-quinone oxidoreductase subunit H, chloroplastic from Solanum bulbocastanum (Wild potato).